An 86-amino-acid polypeptide reads, in one-letter code: Large ribosomal subunit protein uL23 (86 aa).

Belongs to the universal ribosomal protein uL23 family. As to quaternary structure, part of the 50S ribosomal subunit. Contacts protein L29.

In terms of biological role, binds to 23S rRNA. One of the proteins that surrounds the polypeptide exit tunnel on the outside of the ribosome. This chain is Large ribosomal subunit protein uL23, found in Thermococcus onnurineus (strain NA1).